The chain runs to 311 residues: Aquaporin NIP3-1 (311 aa).

Residues 1–34 form a disordered region; sequence MEMAAPNGGGAAGMSSPVNGASAPATPGTPAPLF. The span at 20–34 shows a compositional bias: low complexity; sequence GASAPATPGTPAPLF. Helical transmembrane passes span 85 to 105 and 111 to 131; these read LGAE…APIV and GAIS…TIIL. The short motif at 142-144 is the NPA 1 element; that stretch reads NPS. 3 helical membrane passes run 158-178, 202-222, and 226-246; these read LQVP…GFAL, AFFT…AVAT, and AVGE…ILIA. Residues 255-257 carry the NPA 2 motif; it reads NPV. A helical membrane pass occupies residues 273-293; the sequence is WIYLIAPTLGAVAGAGVYTAV.

This sequence belongs to the MIP/aquaporin (TC 1.A.8) family. NIP (TC 1.A.8.12) subfamily. As to expression, expressed in roots and leaves.

Its subcellular location is the membrane. Functionally, aquaporins facilitate the transport of water and small neutral solutes across cell membranes. The chain is Aquaporin NIP3-1 (NIP3-1) from Oryza sativa subsp. japonica (Rice).